A 347-amino-acid polypeptide reads, in one-letter code: D-fructose 1,6-bisphosphatase class 2/sedoheptulose 1,7-bisphosphatase (347 aa).

4 residues coordinate Mn(2+): Asp33, Glu57, Asp97, and Glu100. Residues 100–102, Tyr131, 176–178, and 198–200 each bind substrate; these read EGT, RKR, and DGD. Residue Glu225 coordinates Mn(2+).

This sequence belongs to the FBPase class 2 family. In terms of assembly, homotetramer. Mn(2+) is required as a cofactor.

It carries out the reaction beta-D-fructose 1,6-bisphosphate + H2O = beta-D-fructose 6-phosphate + phosphate. It catalyses the reaction D-sedoheptulose 1,7-bisphosphate + H2O = D-sedoheptulose 7-phosphate + phosphate. Its pathway is carbohydrate biosynthesis; Calvin cycle. Functionally, catalyzes the hydrolysis of fructose 1,6-bisphosphate (Fru 1,6-P2) and sedoheptulose 1,7-bisphosphate (Sed 1,7-P2) to fructose 6-phosphate and sedoheptulose 7-phosphate, respectively. This is D-fructose 1,6-bisphosphatase class 2/sedoheptulose 1,7-bisphosphatase from Synechococcus sp. (strain JA-2-3B'a(2-13)) (Cyanobacteria bacterium Yellowstone B-Prime).